The sequence spans 119 residues: Large ribosomal subunit protein bL20c (119 aa).

This sequence belongs to the bacterial ribosomal protein bL20 family.

The protein localises to the plastid. It localises to the chloroplast. Binds directly to 23S ribosomal RNA and is necessary for the in vitro assembly process of the 50S ribosomal subunit. It is not involved in the protein synthesizing functions of that subunit. This Oedogonium cardiacum (Filamentous green alga) protein is Large ribosomal subunit protein bL20c.